A 287-amino-acid chain; its full sequence is Nucleotide-binding protein Sfri_3380 (287 aa).

8–15 is a binding site for ATP; it reads GRSGSGKS. 56–59 provides a ligand contact to GTP; sequence DVRN.

The protein belongs to the RapZ-like family.

Its function is as follows. Displays ATPase and GTPase activities. The sequence is that of Nucleotide-binding protein Sfri_3380 from Shewanella frigidimarina (strain NCIMB 400).